A 156-amino-acid polypeptide reads, in one-letter code: Transcription antitermination protein NusB (156 aa).

Belongs to the NusB family.

Its function is as follows. Involved in transcription antitermination. Required for transcription of ribosomal RNA (rRNA) genes. Binds specifically to the boxA antiterminator sequence of the ribosomal RNA (rrn) operons. This chain is Transcription antitermination protein NusB, found in Rickettsia massiliae (strain Mtu5).